A 324-amino-acid polypeptide reads, in one-letter code: tRNA N6-adenosine threonylcarbamoyltransferase (324 aa).

Fe cation is bound by residues His107, His111, and Tyr127. Residues Tyr127 to Gly131, Asp159, Gly172, Glu176, and Asn257 contribute to the substrate site. Asp285 provides a ligand contact to Fe cation.

This sequence belongs to the KAE1 / TsaD family. As to quaternary structure, monomer. Component of the KEOPS complex that consists of Kae1, Bud32, Cgi121 and Pcc1; the whole complex dimerizes. Fe(2+) is required as a cofactor.

Its subcellular location is the cytoplasm. It carries out the reaction L-threonylcarbamoyladenylate + adenosine(37) in tRNA = N(6)-L-threonylcarbamoyladenosine(37) in tRNA + AMP + H(+). In terms of biological role, required for the formation of a threonylcarbamoyl group on adenosine at position 37 (t(6)A37) in tRNAs that read codons beginning with adenine. Is a component of the KEOPS complex that is probably involved in the transfer of the threonylcarbamoyl moiety of threonylcarbamoyl-AMP (TC-AMP) to the N6 group of A37. Kae1 likely plays a direct catalytic role in this reaction, but requires other protein(s) of the complex to fulfill this activity. In vitro, binds tRNA, ssRNA, both single- and double-stranded DNA, and exhibits a low ATPase activity. This Pyrococcus abyssi (strain GE5 / Orsay) protein is tRNA N6-adenosine threonylcarbamoyltransferase.